Consider the following 86-residue polypeptide: uncharacterized protein (86 aa).

The signal sequence occupies residues 1–25 (MNLRKILLSSALSLGMLVSAAPVLA).

This is an uncharacterized protein from Bacillus subtilis (strain 168).